We begin with the raw amino-acid sequence, 138 residues long: MRTLWIMAVLLVGVEGSVIQLGKMILQETGKNPVKYYGAYGCNCGPLGRRKPLDATDRCCYMHKCCYKKLTDSNPIKDRYSYSWENKAIVCKEKNPRLKEMCECDKAVAICFRENMRTYNKKERINTKIFCKKTPEPC.

Positions 1–16 (MRTLWIMAVLLVGVEG) are cleaved as a signal peptide. 6 cysteine pairs are disulfide-bonded: Cys-42–Cys-131, Cys-44–Cys-60, Cys-59–Cys-111, Cys-65–Cys-138, Cys-66–Cys-104, and Cys-91–Cys-102. An important for membrane-damaging activities in eukaryotes and bacteria; heparin-binding region spans residues 121–133 (KKERINTKIFCKK).

As to quaternary structure, monomer. As to expression, expressed by the venom gland.

It is found in the secreted. In terms of biological role, snake venom phospholipase A2 homolog that lacks catalytic activity. Induces local edema a few hours after injection in the hind foot. Is myotoxic. A model of myotoxic mechanism has been proposed: an apo Lys49-PLA2 is activated by the entrance of a hydrophobic molecule (e.g. fatty acid) at the hydrophobic channel of the protein leading to a reorientation of a monomer. This reorientation causes a transition between 'inactive' to 'active' states, causing alignment of C-terminal and membrane-docking sites (MDoS) side-by-side and putting the membrane-disruption sites (MDiS) in the same plane, exposed to solvent and in a symmetric position for both monomers. The MDoS region stabilizes the toxin on membrane by the interaction of charged residues with phospholipid head groups. Subsequently, the MDiS region destabilizes the membrane with penetration of hydrophobic residues. This insertion causes a disorganization of the membrane, allowing an uncontrolled influx of ions (i.e. calcium and sodium), and eventually triggering irreversible intracellular alterations and cell death. In Craspedocephalus puniceus (Flat-nosed pitviper), this protein is Basic phospholipase A2 homolog Tpu-K49a.